The following is a 160-amino-acid chain: MTKRVIYPGTFDPVTHGHSDIISRAANMFDHVVVGVAFSPSKKTMFSLEERMDMLVQATAHLNNVSVVGFSGLLVDLAKDQQANILVRGLRTTMDFEYELGLTTMYKKLMPELETIFLTPPEEHGFLSSTIVRETAIHGGKIDQFVHPYVASAIYQKVKQ.

Threonine 10 is a binding site for substrate. ATP contacts are provided by residues 10–11 (TF) and histidine 18. The substrate site is built by lysine 42, leucine 74, and arginine 88. ATP is bound by residues 89-91 (GLR), glutamate 99, and 124-130 (HGFLSST).

It belongs to the bacterial CoaD family. In terms of assembly, homohexamer. Mg(2+) serves as cofactor.

The protein resides in the cytoplasm. The catalysed reaction is (R)-4'-phosphopantetheine + ATP + H(+) = 3'-dephospho-CoA + diphosphate. Its pathway is cofactor biosynthesis; coenzyme A biosynthesis; CoA from (R)-pantothenate: step 4/5. Functionally, reversibly transfers an adenylyl group from ATP to 4'-phosphopantetheine, yielding dephospho-CoA (dPCoA) and pyrophosphate. In Aliivibrio fischeri (strain MJ11) (Vibrio fischeri), this protein is Phosphopantetheine adenylyltransferase.